The chain runs to 1384 residues: CHD3-type chromatin-remodeling factor PICKLE (1384 aa).

S23 is subject to Phosphoserine. A PHD-type zinc finger spans residues 49-96; that stretch reads ENACQACGESTNLVSCNTCTYAFHAKCLVPPLKDASVENWRCPECVSP. 2 consecutive Chromo domains span residues 98–180 and 190–249; these read NEID…NSED and TTVD…RSKD. Residues 285–471 enclose the Helicase ATP-binding domain; that stretch reads RFSWSKQTHV…FMLMHFLDAG (187 aa). Position 298–305 (298–305) interacts with ATP; sequence DEMGLGKT. The Nuclear localization signal motif lies at 376-383; that stretch reads KKKKSGQI. The short motif at 422 to 425 is the DEAH box element; the sequence is DEGH. Residues 599-760 form the Helicase C-terminal domain; it reads LLDKMMVKLK…NINQEELDDI (162 aa). A compositionally biased stretch (acidic residues) spans 893 to 912; that stretch reads AGLEDVSSDGDESYEAESTD. Disordered regions lie at residues 893-941, 1122-1152, 1313-1344, and 1365-1384; these read AGLE…TPLM, GLQG…NNNA, SDQS…PLRG, and VDVK…MVVD. Positions 1138 to 1152 are enriched in polar residues; sequence TNQNPGSVITGNNNA. Basic and acidic residues-rich tracts occupy residues 1316 to 1341 and 1367 to 1384; these read SKSH…ETKP and VKME…MVVD.

The protein belongs to the SNF2/RAD54 helicase family. Interacts with TAF12B. Mostly expressed in tissue undergoing significant differentiation (meristems and primordia) such as young seedlings, influorescent tissue and young siliques, but not in endosperm and seed coat (at protein level). Levels decrease as organs age. Also present in trichomes.

The protein localises to the nucleus. Functionally, chromatin remodeling factor that represses the expression of embryonic trait genes (such as NFYB9/LEC1) upon and after seed germination and thus enables the developmental switch to post-germinative growth. Silences some MADS-box proteins such as PHE1 and PHE2. Plays a role during carpel differentiation. Regulates late processes in cytokinin signaling. The polypeptide is CHD3-type chromatin-remodeling factor PICKLE (PKL) (Arabidopsis thaliana (Mouse-ear cress)).